The primary structure comprises 152 residues: Large ribosomal subunit protein bL9 (152 aa).

It belongs to the bacterial ribosomal protein bL9 family.

In terms of biological role, binds to the 23S rRNA. The sequence is that of Large ribosomal subunit protein bL9 from Mycobacterium marinum (strain ATCC BAA-535 / M).